Here is a 414-residue protein sequence, read N- to C-terminus: Na(+)/H(+) antiporter NhaA (414 aa).

11 consecutive transmembrane segments (helical) span residues 22 to 42 (VGGF…NSPF), 61 to 81 (LHLT…FFVV), 101 to 121 (MLPI…YAAF), 131 to 151 (GWGI…AVVG), 171 to 191 (LGAI…LPLI), 215 to 235 (SAAL…WALV), 239 to 259 (GVHA…VPLA), 281 to 301 (VLPV…LGAV), 308 to 328 (LGII…GSWV), 343 to 363 (WIDI…SLLI), and 379 to 399 (KAGV…VLAV).

This sequence belongs to the NhaA Na(+)/H(+) (TC 2.A.33) antiporter family.

Its subcellular location is the cell membrane. The catalysed reaction is Na(+)(in) + 2 H(+)(out) = Na(+)(out) + 2 H(+)(in). In terms of biological role, na(+)/H(+) antiporter that extrudes sodium in exchange for external protons. This is Na(+)/H(+) antiporter NhaA from Thermobifida fusca (strain YX).